A 317-amino-acid polypeptide reads, in one-letter code: Ornithine carbamoyltransferase (317 aa).

Residues 57–60 (STRT), Gln-84, Arg-108, and 135–138 (HPCQ) contribute to the carbamoyl phosphate site. L-ornithine contacts are provided by residues Asn-166, Asp-230, and 234–235 (SM). Carbamoyl phosphate contacts are provided by residues 270 to 271 (CL) and Arg-298.

The protein belongs to the aspartate/ornithine carbamoyltransferase superfamily. OTCase family. As to quaternary structure, homododecamer.

It localises to the cytoplasm. It catalyses the reaction carbamoyl phosphate + L-ornithine = L-citrulline + phosphate + H(+). It functions in the pathway amino-acid biosynthesis; L-arginine biosynthesis; L-arginine from L-ornithine and carbamoyl phosphate: step 1/3. Its function is as follows. Reversibly catalyzes the transfer of the carbamoyl group from carbamoyl phosphate (CP) to the N(epsilon) atom of ornithine (ORN) to produce L-citrulline. The sequence is that of Ornithine carbamoyltransferase from Pyrococcus horikoshii (strain ATCC 700860 / DSM 12428 / JCM 9974 / NBRC 100139 / OT-3).